Consider the following 165-residue polypeptide: uncharacterized protein (165 aa).

Residues 16–36 traverse the membrane as a helical segment; sequence ASISSILNFFFFYIMEYFVAV.

This sequence belongs to the asfivirus F165R family.

The protein localises to the host membrane. This is an uncharacterized protein from African swine fever virus (strain Badajoz 1971 Vero-adapted) (Ba71V).